Consider the following 50-residue polypeptide: Photosystem II reaction center protein M (50 aa).

The chain crosses the membrane as a helical span at residues 7 to 27; that stretch reads GFVASLLFVGVPTIFLIGLFI.

This sequence belongs to the PsbM family. As to quaternary structure, PSII is composed of 1 copy each of membrane proteins PsbA, PsbB, PsbC, PsbD, PsbE, PsbF, PsbH, PsbI, PsbJ, PsbK, PsbL, PsbM, PsbT, PsbX, PsbY, Psb30/Ycf12, peripheral proteins PsbO, CyanoQ (PsbQ), PsbU, PsbV and a large number of cofactors. It forms dimeric complexes.

Its subcellular location is the cellular thylakoid membrane. Its function is as follows. One of the components of the core complex of photosystem II (PSII). PSII is a light-driven water:plastoquinone oxidoreductase that uses light energy to abstract electrons from H(2)O, generating O(2) and a proton gradient subsequently used for ATP formation. It consists of a core antenna complex that captures photons, and an electron transfer chain that converts photonic excitation into a charge separation. This subunit is found at the monomer-monomer interface. In Prochlorococcus marinus (strain MIT 9515), this protein is Photosystem II reaction center protein M.